A 732-amino-acid polypeptide reads, in one-letter code: Zinc/cadmium/lead-transporting P-type ATPase (732 aa).

The Cytoplasmic segment spans residues 1-124; that stretch reads MSTPDNHGKK…QAADEPQASR (124 aa). Positions 48–112 constitute an HMA domain; it reads TRYSWKVSGM…AVQKAGYSLR (65 aa). 3 residues coordinate Zn(2+): aspartate 58, cysteine 59, and cysteine 62. A helical membrane pass occupies residues 125–145; the sequence is LKENLPLITLIVMMAISWGLE. Position 146 (glutamine 146) is a topological domain, periplasmic. Residues 147–167 form a helical membrane-spanning segment; the sequence is FNHPFGQLAFIATTLVGLYPI. The Cytoplasmic segment spans residues 168 to 179; that stretch reads ARQALRLIKSGS. The helical transmembrane segment at 180–197 threads the bilayer; it reads YFAIETLMSVAAIGALFI. Residues 198–202 lie on the Periplasmic side of the membrane; sequence GATAE. A helical membrane pass occupies residues 203–222; the sequence is AAMVLLLFLIGERLEGWAAS. Over 223–356 the chain is Cytoplasmic; that stretch reads RARQGVSALM…IDRFSRIYTP (134 aa). The helical transmembrane segment at 357–377 threads the bilayer; sequence AIMAVALLVTLVPPLLFAASW. Over 378–383 the chain is Periplasmic; sequence QEWIYK. Residues 384–404 form a helical membrane-spanning segment; it reads GLTLLLIGCPCALVISTPAAI. 2 residues coordinate Zn(2+): cysteine 392 and cysteine 394. Topologically, residues 405–685 are cytoplasmic; sequence TSGLAAAARR…RATHANIRQN (281 aa). The active-site 4-aspartylphosphate intermediate is the aspartate 436. Positions 436, 438, and 628 each coordinate Mg(2+). Residues 686-702 traverse the membrane as a helical segment; it reads ITIALGLKGIFLVTTLL. At 703–707 the chain is on the periplasmic side; sequence GMTGL. The chain crosses the membrane as a helical span at residues 708–729; that stretch reads WLAVLADTGATVLVTANALRLL. Aspartate 714 lines the Zn(2+) pocket. Topologically, residues 730–732 are cytoplasmic; that stretch reads RRR.

Belongs to the cation transport ATPase (P-type) (TC 3.A.3) family. Type IB subfamily.

The protein resides in the cell inner membrane. It carries out the reaction Pb(2+)(in) + ATP + H2O = Pb(2+)(out) + ADP + phosphate + H(+). It catalyses the reaction Zn(2+)(in) + ATP + H2O = Zn(2+)(out) + ADP + phosphate + H(+). The enzyme catalyses Cd(2+)(in) + ATP + H2O = Cd(2+)(out) + ADP + phosphate + H(+). In terms of biological role, confers resistance to zinc, cadmium and lead. Couples the hydrolysis of ATP with the export of zinc, cadmium or lead. The chain is Zinc/cadmium/lead-transporting P-type ATPase from Shigella sonnei (strain Ss046).